Reading from the N-terminus, the 1238-residue chain is uncharacterized protein (1238 aa).

Disordered stretches follow at residues 22–83 (LQSA…QEHL), 96–150 (SSRQ…IASP), 169–250 (FEPD…HQML), 264–694 (QLNS…AAMV), 739–915 (TKAA…SVPE), 936–955 (THSAEDVNEKQTKVKKAPHE), and 1057–1089 (PKISMHKRKRKQTHDSSISYSDDPNESRSQCSS). Residues 35 to 49 (QPPNQQPHQTQQQQQ) are compositionally biased toward low complexity. A compositionally biased stretch (polar residues) spans 58–72 (PSIQNLTTNATPTST). Residues 73 to 83 (QLQQQQQQEHL) are compositionally biased toward low complexity. Residues 96–110 (SSRQNQGAPSGNLSN) show a composition bias toward polar residues. Positions 125 to 145 (SVSGNTNHTGSNSSSNSGSNN) are enriched in low complexity. Residues 188-204 (SASSASKLPTHNVQQQH) show a composition bias toward polar residues. Composition is skewed to low complexity over residues 272–287 (SYQHMQQDQTQSQSHP), 309–334 (PLLTSGQFHAQPQDASQQQTASSSQH), and 393–406 (SNEESLESNSNSSN). Polar residues predominate over residues 433 to 450 (SKPQHPQQAANLNNSCSP). Ser-453 is modified (phosphoserine). Residues 463–472 (PFSTQKQSQT) show a composition bias toward polar residues. The segment covering 523–536 (TEQHRMQQDDEPPK) has biased composition (basic and acidic residues). Low complexity-rich tracts occupy residues 549 to 570 (QSNSSSSSSSSSSANTHSSQSS) and 632 to 641 (TTAAVAAPPA). Phosphothreonine is present on Thr-642. A compositionally biased stretch (basic and acidic residues) spans 678-688 (ERISSPEKPAE). A phosphoserine mark is found at Ser-682, Ser-749, and Ser-753. Residues 755 to 764 (IPQSRSTSTP) are compositionally biased toward polar residues. A phosphoserine mark is found at Ser-793 and Ser-799. Positions 832 to 860 (STSAAAAAALAARQLSEAASATKSKPAAG) are enriched in low complexity. The span at 861-874 (AKKKNAGVKGKKGS) shows a compositional bias: basic residues. Over residues 937 to 947 (HSAEDVNEKQT) the composition is skewed to basic and acidic residues. A compositionally biased stretch (polar residues) spans 1071 to 1089 (DSSISYSDDPNESRSQCSS). The segment at 1089–1131 (SVDLLDCSTESKFVETFRGMGKTSENGFEVWLHEDCAVWSNDI) adopts a C2HC pre-PHD-type; degenerate zinc-finger fold. Phosphoserine is present on Ser-1099. The segment at 1151-1199 (YQCVLCQQTGASICCFQRCCKAAAHVPCGRSANWSLSEEDRKVYCHLHR) adopts a PHD-type zinc-finger fold.

This is an uncharacterized protein from Drosophila melanogaster (Fruit fly).